Consider the following 617-residue polypeptide: mRNA-decapping enzyme 1B (617 aa).

A2 carries the N-acetylalanine modification. Position 147 is a phosphoserine (S147). Residue Y191 is modified to Phosphotyrosine. 2 disordered regions span residues 195 to 222 and 243 to 266; these read NLIK…LDPE and TVEP…KLPI. Polar residues predominate over residues 205–219; sequence SENQQQRIPQPNQTL. Over residues 252–261 the composition is skewed to low complexity; that stretch reads QQQQQQQQQQ. 2 positions are modified to phosphoserine: S275 and S336. Positions 362 to 426 are disordered; it reads TPGAANKCDP…VGHQAHGREQ (65 aa). Positions 371-381 are enriched in low complexity; it reads PSTPAPASSAA. T392 carries the phosphothreonine modification. 2 positions are modified to phosphoserine: S448 and S511.

The protein belongs to the DCP1 family. As to quaternary structure, interacts with DCP1A. In terms of assembly, (Microbial infection) Interacts with rotavirus A non-structural protein 2; this interaction probably plays a role in the sequestration of DCP1B in viral factories. Interacts with rotavirus A non-structural protein 5; this interaction probably plays a role in its sequestration in viral factories.

The protein resides in the cytoplasm. The protein localises to the nucleus. It catalyses the reaction a 5'-end (N(7)-methyl 5'-triphosphoguanosine)-ribonucleoside in mRNA + H2O = N(7)-methyl-GDP + a 5'-end phospho-ribonucleoside in mRNA + 2 H(+). May play a role in the degradation of mRNAs, both in normal mRNA turnover and in nonsense-mediated mRNA decay. May remove the 7-methyl guanine cap structure from mRNA molecules, yielding a 5'-phosphorylated mRNA fragment and 7m-GDP. This Homo sapiens (Human) protein is mRNA-decapping enzyme 1B (DCP1B).